Here is a 349-residue protein sequence, read N- to C-terminus: UPF0284 protein MA_3887 (349 aa).

The protein belongs to the UPF0284 family.

This is UPF0284 protein MA_3887 from Methanosarcina acetivorans (strain ATCC 35395 / DSM 2834 / JCM 12185 / C2A).